Consider the following 475-residue polypeptide: MSPKTETKASVGFKAGVKDYRLTYYTPEYQTKDTDILAAFRVTPQPGVPPEEAGAAVAAESSTGTWTTVWTDGLTSLDRYKGRCYDIEPVPGEESQFIAYVAYPLDLFEEGSVTNLFTSIVGNVFGFKALRALRLEDLRIPPAYSKTFQGPPHGIQVERDKLNKYGRPLLGCTIKPKLGLSAKNYGRAVYECLRGGLDFTKDDENVNSQPFMRWRDRFVFCAEAIYKAQAETGEIKGHYLNATAGTCEEMMKRAIFARELGVPIVMHDYLTGGFTANTSLAHYCRDNGLLLHIHRAMHAVIDRQRNHGMHFRVLAKALRMSGGDHIHAGTVVGKLEGERDVTLGFVDLLRDDFIEKDRSRGIYFTQDWVSMPGVLPVASGGIHVWHMPALTEIFGDDSVLQFGGGTLGHPWGNAPGAVANRVALEACVQARNEGRDLAREGNEVIREASKWSPELAAACEIWKEIKFEFDTIDYL.

Positions 1-2 are excised as a propeptide; it reads MS. P3 carries the N-acetylproline modification. At K14 the chain carries N6,N6,N6-trimethyllysine. The substrate site is built by N123 and T173. K175 serves as the catalytic Proton acceptor. A substrate-binding site is contributed by K177. Mg(2+) is bound by residues K201, D203, and E204. K201 bears the N6-carboxylysine mark. H294 (proton acceptor) is an active-site residue. Residues R295, H327, and S379 each coordinate substrate.

This sequence belongs to the RuBisCO large chain family. Type I subfamily. In terms of assembly, heterohexadecamer of 8 large chains and 8 small chains; disulfide-linked. The disulfide link is formed within the large subunit homodimers. It depends on Mg(2+) as a cofactor. Post-translationally, the disulfide bond which can form in the large chain dimeric partners within the hexadecamer appears to be associated with oxidative stress and protein turnover.

The protein resides in the plastid. The protein localises to the chloroplast. The catalysed reaction is 2 (2R)-3-phosphoglycerate + 2 H(+) = D-ribulose 1,5-bisphosphate + CO2 + H2O. The enzyme catalyses D-ribulose 1,5-bisphosphate + O2 = 2-phosphoglycolate + (2R)-3-phosphoglycerate + 2 H(+). RuBisCO catalyzes two reactions: the carboxylation of D-ribulose 1,5-bisphosphate, the primary event in carbon dioxide fixation, as well as the oxidative fragmentation of the pentose substrate in the photorespiration process. Both reactions occur simultaneously and in competition at the same active site. In Pseudolarix amabilis (Golden larch), this protein is Ribulose bisphosphate carboxylase large chain.